The primary structure comprises 29 residues: Toxin Bl-4 (29 aa).

This sequence belongs to the long (4 C-C) scorpion toxin superfamily. Sodium channel inhibitor family. Beta subfamily. As to expression, expressed by the venom gland.

It is found in the secreted. Excitatory insect beta-toxins induce a spastic paralysis. They bind voltage-independently at site-4 of sodium channels (Nav) and shift the voltage of activation toward more negative potentials thereby affecting sodium channel activation and promoting spontaneous and repetitive firing. The fraction to which this protein belongs exhibits low toxicity and induces transient paralysis in all insects tested (the crickets A.domesticus). This Buthacus leptochelys (Egyptian fat-tailed scorpion) protein is Toxin Bl-4.